A 759-amino-acid chain; its full sequence is MDGIMKNDLLWFGNHVFDLTPNSFDSDFVEQLSKFEGKEGLKRKLFDSSEYFQNFSFQVNDDLLGKDVILDISNQQLTPAVPGCETSSNSKLISASKEITSERKRAKSSVSPSYLTDSSPSDLSVENKVLLTCPSWDGENFKNLEARSPFISEAPSRVYDYFLHNQDWSPKPLFSALQVYPLATIFNCVAGLPQGFESTVFPWNKTSSTFELDPTISVSGMSDECFASIVQKFSAIGGLIKKALNEFSLYKTNISFYLSNFIVNGVLQYRKEFQRWLRLYEFRRFGLIGLSNFVNSFSSFFELISHFLIKSAQNLKGDSLLDFLFDYARSCQNTISYPIALQCLIYCSNPYFKRLELALKVSCAYGHIDSSLFLSLPRFFPSELCVSIEQCIQFLSLIREQKEIFNKNNKEFINPLNIRFAYSFNDINQACVIEERCNFSSLSFGNLEQTSVNNDSEEFETLLAKMNMTPDFNDNLLQLKFTDDVRNVCPLNLNVCCCIAEPIQSFILSFLRSTYKVLKNDFQVFDLLNFFHSTFLFQNYEFSDNVISLLKSRRLDKSDRNELAEDLNSDDRYNFISRLKKFIFMEKEKNGLSRSLSKSITFTLDSASVSEFEDVYPDLQFQCQVIGALRILFTDNSLNYYSKTFSYVLHLFQAQSDFESSVELKDRSIVTKTTIMSWSKYQGTKESLFQFLSIYIPECMLPFTKLLKSIYSPDCPTNIQNSAIKNAASVHEQCTKAIYQKVKELFDTMKLWESSIKVS.

As to quaternary structure, interacts with gamma-tubulin.

It localises to the cytoplasm. It is found in the cytoskeleton. The protein resides in the microtubule organizing center. Its subcellular location is the spindle pole body. Its function is as follows. Component of the gamma tubule complex that is required for the regulation of both interphase microtubules and mitotic bipolar spindles. This chain is Spindle pole body component alp16 (alp16), found in Schizosaccharomyces pombe (strain 972 / ATCC 24843) (Fission yeast).